A 38-amino-acid polypeptide reads, in one-letter code: Large ribosomal subunit protein bL36 (38 aa).

Belongs to the bacterial ribosomal protein bL36 family.

The sequence is that of Large ribosomal subunit protein bL36 from Aster yellows witches'-broom phytoplasma (strain AYWB).